Here is a 249-residue protein sequence, read N- to C-terminus: Cytochrome c oxidase subunit 2 (249 aa).

The next 2 membrane-spanning stretches (helical) occupy residues 40-60 (NIMFYLLVILGLVSWMLYTIT) and 81-101 (IIWTIFPAVVLLIIAFPSFIL). Histidine 184, cysteine 219, glutamate 221, cysteine 223, histidine 227, and methionine 230 together coordinate Cu cation. Residue glutamate 221 coordinates Mg(2+).

The protein belongs to the cytochrome c oxidase subunit 2 family. In terms of assembly, component of the cytochrome c oxidase (complex IV, CIV), a multisubunit enzyme composed of a catalytic core of 3 subunits and several supernumerary subunits. The complex exists as a monomer or a dimer and forms supercomplexes (SCs) in the inner mitochondrial membrane with ubiquinol-cytochrome c oxidoreductase (cytochrome b-c1 complex, complex III, CIII). Cu cation serves as cofactor.

It is found in the mitochondrion inner membrane. The enzyme catalyses 4 Fe(II)-[cytochrome c] + O2 + 8 H(+)(in) = 4 Fe(III)-[cytochrome c] + 2 H2O + 4 H(+)(out). In terms of biological role, component of the cytochrome c oxidase, the last enzyme in the mitochondrial electron transport chain which drives oxidative phosphorylation. The respiratory chain contains 3 multisubunit complexes succinate dehydrogenase (complex II, CII), ubiquinol-cytochrome c oxidoreductase (cytochrome b-c1 complex, complex III, CIII) and cytochrome c oxidase (complex IV, CIV), that cooperate to transfer electrons derived from NADH and succinate to molecular oxygen, creating an electrochemical gradient over the inner membrane that drives transmembrane transport and the ATP synthase. Cytochrome c oxidase is the component of the respiratory chain that catalyzes the reduction of oxygen to water. Electrons originating from reduced cytochrome c in the intermembrane space (IMS) are transferred via the dinuclear copper A center (CU(A)) of subunit 2 and heme A of subunit 1 to the active site in subunit 1, a binuclear center (BNC) formed by heme A3 and copper B (CU(B)). The BNC reduces molecular oxygen to 2 water molecules using 4 electrons from cytochrome c in the IMS and 4 protons from the mitochondrial matrix. The chain is Cytochrome c oxidase subunit 2 (COX2) from Vanderwaltozyma polyspora (strain ATCC 22028 / DSM 70294 / BCRC 21397 / CBS 2163 / NBRC 10782 / NRRL Y-8283 / UCD 57-17) (Kluyveromyces polysporus).